The sequence spans 144 residues: Peptide methionine sulfoxide reductase MsrB (144 aa).

Positions 5–128 constitute a MsrB domain; the sequence is KEELRQRIGE…NSAALQFIPV (124 aa). Residue Cys-117 is the Nucleophile of the active site.

It belongs to the MsrB Met sulfoxide reductase family.

The enzyme catalyses L-methionyl-[protein] + [thioredoxin]-disulfide + H2O = L-methionyl-(R)-S-oxide-[protein] + [thioredoxin]-dithiol. The sequence is that of Peptide methionine sulfoxide reductase MsrB from Ligilactobacillus salivarius (strain UCC118) (Lactobacillus salivarius).